The following is a 236-amino-acid chain: Purine nucleoside phosphorylase DeoD-type (236 aa).

His-5 is a binding site for a purine D-ribonucleoside. Residues Gly-21, Arg-25, Arg-44, and 88-91 (RVGT) each bind phosphate. Residues 180-182 (EME) and 204-205 (SD) each bind a purine D-ribonucleoside. Asp-205 functions as the Proton donor in the catalytic mechanism.

Belongs to the PNP/UDP phosphorylase family. As to quaternary structure, homohexamer; trimer of homodimers.

The catalysed reaction is a purine D-ribonucleoside + phosphate = a purine nucleobase + alpha-D-ribose 1-phosphate. It carries out the reaction a purine 2'-deoxy-D-ribonucleoside + phosphate = a purine nucleobase + 2-deoxy-alpha-D-ribose 1-phosphate. Its function is as follows. Catalyzes the reversible phosphorolytic breakdown of the N-glycosidic bond in the beta-(deoxy)ribonucleoside molecules, with the formation of the corresponding free purine bases and pentose-1-phosphate. The sequence is that of Purine nucleoside phosphorylase DeoD-type from Shewanella frigidimarina (strain NCIMB 400).